The chain runs to 1163 residues: Hamartin (1163 aa).

Lys-30 is covalently cross-linked (Glycyl lysine isopeptide (Lys-Gly) (interchain with G-Cter in ubiquitin)). Over residues 295–316 (SSYVDTQNSYGGATSTPSSTSR) the composition is skewed to polar residues. Disordered stretches follow at residues 295 to 337 (SSYV…STRP) and 353 to 594 (CGMT…QRGV). Residues 321 to 337 (STPGQLPQSLSSLSTRP) show a composition bias toward low complexity. The span at 393–402 (TSPPPAPPCP) shows a compositional bias: pro residues. The tract at residues 403–787 (QDDCAHGPAS…QIRQLQHDRE (385 aa)) is mediates interaction with WDR45B. The segment covering 474-487 (EKDKEEAAISKELS) has biased composition (basic and acidic residues). 6 positions are modified to phosphoserine: Ser-487, Ser-505, Ser-511, Ser-521, Ser-595, and Ser-598. Polar residues predominate over residues 512 to 530 (LSGSQRKTHSAASGTQGFS). Coiled-coil stretches lie at residues 721–919 (RKVI…LAKK) and 970–994 (EKDGRLQKLEEDRAEAAEAAEERLD). Positions 1008–1020 (NEEAAGHNGETRT) are enriched in basic and acidic residues. Residues 1008–1163 (NEEAAGHNGE…DYNETHHEHS (156 aa)) are disordered. Positions 1029 to 1046 (SCGGRVTGGSSSSSSELS) are enriched in low complexity. The segment covering 1066 to 1083 (EPSSSIPTTVGSLPSSKS) has biased composition (polar residues). Basic and acidic residues predominate over residues 1088–1099 (KTRELFRNKSES). Ser-1097 is modified (phosphoserine). Over residues 1131–1146 (PPSLDAPHPSSPSSDS) the composition is skewed to low complexity. Over residues 1154–1163 (DYNETHHEHS) the composition is skewed to basic and acidic residues.

Component of the TSC-TBC complex (also named Rhebulator complex), composed of 2 molecules of TSC1, 2 molecules of TSC2 and 1 molecule of TBC1D7. Probably forms a complex composed of chaperones HSP90 and HSP70, co-chaperones STIP1/HOP, CDC37, PPP5C, PTGES3/p23, TSC1 and client protein TSC2. Forms a complex composed of chaperones HSP90 and HSP70, co-chaperones CDC37, PPP5C, TSC1 and client protein TSC2, CDK4, AKT, RAF1 and NR3C1; this complex does not contain co-chaperones STIP1/HOP and PTGES3/p23. Forms a complex containing HSP90AA1, TSC1 and TSC2; TSC1 is required to recruit TCS2 to the complex. Interacts (via C-terminus) with the closed form of HSP90AA1 (via the middle domain and TPR repeat-binding motif). Interacts with DOCK7. Interacts with FBXW5. Interacts with WDR45B. Interacts with RPAP3 and URI1. Post-translationally, phosphorylation at Ser-505 does not affect interaction with TSC2. 'Lys-63'-linked ubiquitinated at Lys-30 by PELI1; the ubiquitination promotes TSC1/TSC2 complex stability. As to expression, highly expressed in brain, spleen and kidney, followed by liver and heart.

The protein localises to the lysosome membrane. It is found in the cytoplasm. It localises to the cytosol. Its function is as follows. Non-catalytic component of the TSC-TBC complex, a multiprotein complex that acts as a negative regulator of the canonical mTORC1 complex, an evolutionarily conserved central nutrient sensor that stimulates anabolic reactions and macromolecule biosynthesis to promote cellular biomass generation and growth. The TSC-TBC complex acts as a GTPase-activating protein (GAP) for the small GTPase RHEB, a direct activator of the protein kinase activity of mTORC1. In absence of nutrients, the TSC-TBC complex inhibits mTORC1, thereby preventing phosphorylation of ribosomal protein S6 kinase (RPS6KB1 and RPS6KB2) and EIF4EBP1 (4E-BP1) by the mTORC1 signaling. The TSC-TBC complex is inactivated in response to nutrients, relieving inhibition of mTORC1. Within the TSC-TBC complex, TSC1 stabilizes TSC2 and prevents TSC2 self-aggregation. Involved in microtubule-mediated protein transport via its ability to regulate mTORC1 signaling. Also acts as a co-chaperone for HSP90AA1 facilitating HSP90AA1 chaperoning of protein clients such as kinases, TSC2 and glucocorticoid receptor NR3C1. Increases ATP binding to HSP90AA1 and inhibits HSP90AA1 ATPase activity. Competes with the activating co-chaperone AHSA1 for binding to HSP90AA1, thereby providing a reciprocal regulatory mechanism for chaperoning of client proteins. Recruits TSC2 to HSP90AA1 and stabilizes TSC2 by preventing the interaction between TSC2 and ubiquitin ligase HERC1. This Rattus norvegicus (Rat) protein is Hamartin.